The chain runs to 54 residues: Ovomucoid (54 aa).

The region spanning 4-54 (VDCSDYPKPACTVEYMPLCGSDNKTYDNKCNFCNAVVDSNGTLTLSHFGKC) is the Kazal-like domain. 3 disulfides stabilise this stretch: cysteine 6–cysteine 36, cysteine 14–cysteine 33, and cysteine 22–cysteine 54. Asparagine 43 carries N-linked (GlcNAc...) asparagine glycosylation.

The protein localises to the secreted. This is Ovomucoid from Anser anser anser (Western greylag goose).